We begin with the raw amino-acid sequence, 220 residues long: Protein-L-isoaspartate O-methyltransferase (220 aa).

Residue S68 is part of the active site.

It belongs to the methyltransferase superfamily. L-isoaspartyl/D-aspartyl protein methyltransferase family.

It localises to the cytoplasm. The enzyme catalyses [protein]-L-isoaspartate + S-adenosyl-L-methionine = [protein]-L-isoaspartate alpha-methyl ester + S-adenosyl-L-homocysteine. Functionally, catalyzes the methyl esterification of L-isoaspartyl residues in peptides and proteins that result from spontaneous decomposition of normal L-aspartyl and L-asparaginyl residues. It plays a role in the repair and/or degradation of damaged proteins. In Dictyoglomus turgidum (strain DSM 6724 / Z-1310), this protein is Protein-L-isoaspartate O-methyltransferase.